The primary structure comprises 502 residues: C2H2-type transcription factor MSN2 (502 aa).

2 consecutive C2H2-type zinc fingers follow at residues Phe-385–His-408 and Phe-414–His-436.

Its subcellular location is the nucleus. In terms of biological role, key downstream transcription factor in the HOG1-MAPK pathway. Plays crucial roles in the regulation of growth, conidiation, trap development and fatty acid metabolism. Negatively regulates secondary metabolism such as arthrobotrisins biosynthesis.Also regulates autophagy and endocytosis. The chain is C2H2-type transcription factor MSN2 from Arthrobotrys oligospora (strain ATCC 24927 / CBS 115.81 / DSM 1491) (Nematode-trapping fungus).